A 352-amino-acid chain; its full sequence is Ferrochelatase (352 aa).

Fe cation contacts are provided by H222 and E303.

It belongs to the ferrochelatase family.

It is found in the cytoplasm. The catalysed reaction is heme b + 2 H(+) = protoporphyrin IX + Fe(2+). Its pathway is porphyrin-containing compound metabolism; protoheme biosynthesis; protoheme from protoporphyrin-IX: step 1/1. Functionally, catalyzes the ferrous insertion into protoporphyrin IX. The chain is Ferrochelatase from Brucella melitensis biotype 2 (strain ATCC 23457).